A 479-amino-acid chain; its full sequence is Alpha,alpha-trehalose-phosphate synthase [UDP-forming] 2 (479 aa).

D-glucose 6-phosphate is bound by residues Y96 and D150. The UDP site is built by R287 and K292. UDP-alpha-D-glucose-binding residues include R287 and K292. D-glucose 6-phosphate is bound at residue R325. UDP is bound by residues 363 to 364 (SV) and 390 to 394 (LVSFE). 386–394 (DGMNLVSFE) contributes to the UDP-alpha-D-glucose binding site.

The protein belongs to the glycosyltransferase 20 family.

The catalysed reaction is D-glucose 6-phosphate + UDP-alpha-D-glucose = alpha,alpha-trehalose 6-phosphate + UDP + H(+). It participates in carbohydrate biosynthesis. Synthase catalytic subunit of the trehalose synthase complex that catalyzes the production of trehalose from glucose-6-phosphate and UDP-alpha-D-glucose in a two step process. The disaccharide trehalose serves as a storage carbohydrate that is mobilized during conidial germination. Regulates the level of trehalose as a protectant for cell integrity during thermal and oxidative stress. This is Alpha,alpha-trehalose-phosphate synthase [UDP-forming] 2 from Aspergillus fumigatus (strain ATCC MYA-4609 / CBS 101355 / FGSC A1100 / Af293) (Neosartorya fumigata).